Reading from the N-terminus, the 464-residue chain is Trigger factor (464 aa).

Residues 162-243 (GDFVSIDLSA…VKSVKERELP (82 aa)) enclose the PPIase FKBP-type domain. Residues 431-464 (IDTSEFFGKRPSGDGAADEDADQADESTTADAGE) form a disordered region. The span at 446-455 (AADEDADQAD) shows a compositional bias: acidic residues.

Belongs to the FKBP-type PPIase family. Tig subfamily.

The protein resides in the cytoplasm. It carries out the reaction [protein]-peptidylproline (omega=180) = [protein]-peptidylproline (omega=0). In terms of biological role, involved in protein export. Acts as a chaperone by maintaining the newly synthesized protein in an open conformation. Functions as a peptidyl-prolyl cis-trans isomerase. In Mycobacterium avium (strain 104), this protein is Trigger factor.